A 134-amino-acid polypeptide reads, in one-letter code: Ribonuclease VapC1 (134 aa).

The region spanning 4–123 is the PINc domain; it reads IIDTSIIIAL…LNVKDFKRIQ (120 aa). The Mg(2+) site is built by D6 and D97.

It belongs to the PINc/VapC protein family. Mg(2+) is required as a cofactor.

Toxic component of a type II toxin-antitoxin (TA) system. Has ssRNase activity. Upon expression in E.coli inhibits growth in liquid culture; this toxic effect is neutralized by coexpression with cognate antitoxin VapB1. Its RNase activity is partially inhibited in vitro by VapB1. This Rickettsia felis (strain ATCC VR-1525 / URRWXCal2) (Rickettsia azadi) protein is Ribonuclease VapC1.